We begin with the raw amino-acid sequence, 130 residues long: Small ribosomal subunit protein uS9 (130 aa).

It belongs to the universal ribosomal protein uS9 family.

In Shewanella piezotolerans (strain WP3 / JCM 13877), this protein is Small ribosomal subunit protein uS9.